A 299-amino-acid chain; its full sequence is Acetyl-coenzyme A carboxylase carboxyl transferase subunit beta (299 aa).

The CoA carboxyltransferase N-terminal domain occupies 25-294 (VWTKCTSCEQ…PFVEPELIQE (270 aa)). Zn(2+) contacts are provided by Cys29, Cys32, Cys48, and Cys51. The segment at 29-51 (CTSCEQVLYRDELKRHLEVCPKC) adopts a C4-type zinc-finger fold.

Belongs to the AccD/PCCB family. Acetyl-CoA carboxylase is a heterohexamer composed of biotin carboxyl carrier protein (AccB), biotin carboxylase (AccC) and two subunits each of ACCase subunit alpha (AccA) and ACCase subunit beta (AccD). It depends on Zn(2+) as a cofactor.

Its subcellular location is the cytoplasm. The enzyme catalyses N(6)-carboxybiotinyl-L-lysyl-[protein] + acetyl-CoA = N(6)-biotinyl-L-lysyl-[protein] + malonyl-CoA. It participates in lipid metabolism; malonyl-CoA biosynthesis; malonyl-CoA from acetyl-CoA: step 1/1. Its function is as follows. Component of the acetyl coenzyme A carboxylase (ACC) complex. Biotin carboxylase (BC) catalyzes the carboxylation of biotin on its carrier protein (BCCP) and then the CO(2) group is transferred by the transcarboxylase to acetyl-CoA to form malonyl-CoA. In Histophilus somni (strain 129Pt) (Haemophilus somnus), this protein is Acetyl-coenzyme A carboxylase carboxyl transferase subunit beta.